A 391-amino-acid polypeptide reads, in one-letter code: Alanine racemase, biosynthetic (391 aa).

Lysine 52 (proton acceptor; specific for D-alanine) is an active-site residue. An N6-(pyridoxal phosphate)lysine modification is found at lysine 52. Residue arginine 149 participates in substrate binding. Tyrosine 271 acts as the Proton acceptor; specific for L-alanine in catalysis. Residue methionine 330 participates in substrate binding.

Belongs to the alanine racemase family. Requires pyridoxal 5'-phosphate as cofactor.

It catalyses the reaction L-alanine = D-alanine. Its pathway is amino-acid biosynthesis; D-alanine biosynthesis; D-alanine from L-alanine: step 1/1. The protein operates within cell wall biogenesis; peptidoglycan biosynthesis. In terms of biological role, catalyzes the interconversion of L-alanine and D-alanine. Provides the D-alanine required for cell wall biosynthesis. In Agrobacterium fabrum (strain C58 / ATCC 33970) (Agrobacterium tumefaciens (strain C58)), this protein is Alanine racemase, biosynthetic (alr).